Here is a 182-residue protein sequence, read N- to C-terminus: uncharacterized protein (182 aa).

This is an uncharacterized protein from Thermoproteus tenax (TTV1).